The sequence spans 284 residues: Pantothenate synthetase (284 aa).

30-37 provides a ligand contact to ATP; sequence MGFLHEGH. His37 acts as the Proton donor in catalysis. Residue Gln61 coordinates (R)-pantoate. Residue Gln61 participates in beta-alanine binding. 147 to 150 provides a ligand contact to ATP; it reads GRKD. Gln153 contributes to the (R)-pantoate binding site. Residues Val176 and 184–187 contribute to the ATP site; that span reads MSSR.

It belongs to the pantothenate synthetase family. In terms of assembly, homodimer.

Its subcellular location is the cytoplasm. It carries out the reaction (R)-pantoate + beta-alanine + ATP = (R)-pantothenate + AMP + diphosphate + H(+). The protein operates within cofactor biosynthesis; (R)-pantothenate biosynthesis; (R)-pantothenate from (R)-pantoate and beta-alanine: step 1/1. Catalyzes the condensation of pantoate with beta-alanine in an ATP-dependent reaction via a pantoyl-adenylate intermediate. The polypeptide is Pantothenate synthetase (Pelobacter propionicus (strain DSM 2379 / NBRC 103807 / OttBd1)).